Reading from the N-terminus, the 354-residue chain is Gibberellin receptor GID1 (354 aa).

The Involved in the stabilization of the negatively charged intermediate by the formation of the oxyanion hole motif lies at 120 to 122 (HGG). Residues 122–123 (GS), Y134, S198, and D250 each bind gibberellin A3. Gibberellin A4-binding positions include 122-123 (GS), Y134, and S198. S198 is an active-site residue. Residue D296 is part of the active site. A gibberellin A3-binding site is contributed by G327. Position 327 (G327) interacts with gibberellin A4.

It belongs to the 'GDXG' lipolytic enzyme family. Interacts with the DELLA protein SLR1 in a GA-dependent manner, resulting in subsequent SLR1 degradation.

Its subcellular location is the nucleus. Functions as a soluble gibberellin (GA) receptor. GA is an essential hormone that regulates growth and development in plants. Binds with high affinity the biologically active GAs such as GA1, GA3 and GA4, but has low or no affinity for the biologically inactive GAs. Upon GA-binding, it interacts with the DELLA protein SLR1, a repressor of GA signaling. This leads to SLR1 degradation by the proteasome, allowing the GA signaling pathway. In Oryza sativa subsp. japonica (Rice), this protein is Gibberellin receptor GID1.